The sequence spans 156 residues: RNA polymerase sigma factor SigS (156 aa).

Residues 29-44 carry the Polymerase core binding motif; that stretch reads EYYQLLLIKMWQLSQI. A DNA-binding region (H-T-H motif) is located at residues 126 to 145; the sequence is QFEIAEIMSLSLSTIKLIKM.

It belongs to the sigma-70 factor family.

Sigma factors are initiation factors that promote the attachment of RNA polymerase to specific initiation sites and are then released. Sigma-S contributes to the protection against external stress, thus playing a role in cellular fitness and survival. The chain is RNA polymerase sigma factor SigS (sigS) from Staphylococcus aureus (strain Mu50 / ATCC 700699).